Reading from the N-terminus, the 283-residue chain is MEHKIVHVGDIPVANDKPFTLFAGMNVLESRDLAMQICEHYVKVTDKLGIPYVFKASFDKANRSSVHSYRGPGLEEGMKIFQELKETFGVKIITDVHTEAQAQPVADVVDVIQLPAFLARQTDLVEAMAKTGAVINVKKPQFMSPGQVGNIVEKFAECGNDKVILCERGSCHGYDNLVVDMLGFGVMKQASNGSPIIFDVTHSLQMRDPSGAASGGRREQTVELAKAGLATGIAGLFIEAHPNPDKARCDGPSALPLDKLEPFLAQMKALDDLIKSFAHIDIR.

This sequence belongs to the KdsA family.

Its subcellular location is the cytoplasm. It carries out the reaction D-arabinose 5-phosphate + phosphoenolpyruvate + H2O = 3-deoxy-alpha-D-manno-2-octulosonate-8-phosphate + phosphate. It participates in carbohydrate biosynthesis; 3-deoxy-D-manno-octulosonate biosynthesis; 3-deoxy-D-manno-octulosonate from D-ribulose 5-phosphate: step 2/3. Its pathway is bacterial outer membrane biogenesis; lipopolysaccharide biosynthesis. This is 2-dehydro-3-deoxyphosphooctonate aldolase from Vibrio cholerae serotype O1 (strain ATCC 39315 / El Tor Inaba N16961).